A 2167-amino-acid polypeptide reads, in one-letter code: SH3 and multiple ankyrin repeat domains protein 1 (2167 aa).

The disordered stretch occupies residues 1 to 63 (MTHSPATSED…TRGLQGRSMS (63 aa)). The segment covering 17–32 (SECPEGGSESDSSPDG) has biased composition (low complexity). The segment covering 33–47 (PGRGPQGTRGRGSGA) has biased composition (gly residues). Arg43 bears the Omega-N-methylarginine mark. Tyr186 bears the Phosphotyrosine mark. ANK repeat units follow at residues 212 to 242 (SGET…HIDF), 246 to 275 (DGMT…SPNY), 279 to 309 (RGLT…QLGI), 313 to 342 (NGWQ…EPGA), 346 to 375 (SGNT…NKDV), and 379 to 407 (NGQT…EQDV). 2 disordered regions span residues 413–432 (SPKY…TVPP) and 454–546 (PGAS…SRGR). Over residues 454 to 479 (PGASSSGTPGPTSGSQGQSQPSAPST) the composition is skewed to low complexity. Residues 527–542 (PAGGTGGSGGPGGSLG) show a composition bias toward gly residues. Ser540 bears the Phosphoserine mark. Omega-N-methylarginine is present on Arg544. Residues 554-613 (VPGRSFMAVKSYQAQGEGEISLSKGEKIKVLSIGEGGFWEGQVKGRVGWFPSDCLEEVAN) form the SH3 domain. Residues 663–757 (TVLLQKKDSE…TLMVKVVMVT (95 aa)) form the PDZ domain. Phosphoserine occurs at positions 671 and 791. The disordered stretch occupies residues 841–894 (ISASESPGPGGLASLGKHRPKGFFATESSFDPHHRSQPSYDRPSFLPPGPGLML). Ser898 is modified (phosphoserine). 2 disordered regions span residues 917-1233 (SRSL…LDFT) and 1245-1290 (RREG…RHSK). The segment covering 928-947 (IPPPPTTSPPEPPYSTPPAP) has biased composition (pro residues). Omega-N-methylarginine is present on Arg958. A compositionally biased stretch (low complexity) spans 969-980 (PLPASSPSSFDG). The span at 1004-1028 (AHHHPPHHHHHHAPPPQPHHHHAHP) shows a compositional bias: basic residues. Arg1059 carries the post-translational modification Omega-N-methylarginine. Over residues 1064–1089 (SPTSGAPSPSHHSSSGGSSGPAQAPA) the composition is skewed to low complexity. An omega-N-methylarginine mark is found at Arg1098 and Arg1109. Composition is skewed to low complexity over residues 1132 to 1146 (SLPP…ALPR) and 1171 to 1184 (STSS…GSST). Over residues 1203–1224 (SPAPATSPVPPSPSPVPTPASP) the composition is skewed to pro residues. Residues 1245–1256 (RREGGWQNEARR) show a composition bias toward basic and acidic residues. Asymmetric dimethylarginine is present on Arg1257. Position 1291 is a phosphoserine (Ser1291). Disordered stretches follow at residues 1308 to 1331 (GGSS…GSSS), 1361 to 1417 (LAAR…VLRL), 1429 to 1458 (RAGL…PPTA), 1500 to 1725 (FLEN…AGVA), 1740 to 1790 (GQAF…TPTS), 1828 to 1866 (VPPV…QPQA), 1898 to 1988 (PWAR…STRH), and 2002 to 2029 (RRAP…LPIL). Residues 1363-1372 (ARERALKESS) are compositionally biased toward basic and acidic residues. Pro residues predominate over residues 1378–1395 (PQPPPRPPSPRYDAPPPT). Basic residues predominate over residues 1396–1408 (LHHHSPHSPHSPH). Arg1429 carries the post-translational modification Omega-N-methylarginine. The residue at position 1442 (Ser1442) is a Phosphoserine. The segment covering 1530–1541 (RRVLPTSPTSPR) has biased composition (low complexity). A compositionally biased stretch (pro residues) spans 1589-1615 (PLTPGPPHPLPDPPSPATPLPAAPPPA). The segment covering 1624–1641 (DSTASSLTSYDSEVATLT) has biased composition (polar residues). Pro residues predominate over residues 1648–1676 (PGDPPAPGPPAPAAPAPPAPQPGPDPPPG). Over residues 1684–1694 (VDSRSSSDHPL) the composition is skewed to basic and acidic residues. A compositionally biased stretch (low complexity) spans 1695–1708 (ETISSASTLSSLSA). Residues 1709–1724 (EGGGNTGGVAGGGAGV) are compositionally biased toward gly residues. The segment covering 1850 to 1861 (PGPPPPPLPGPL) has biased composition (pro residues). The residue at position 1901 (Arg1901) is an Omega-N-methylarginine. Low complexity-rich tracts occupy residues 1934-1945 (SQTSLLSKPSSS), 1960-1985 (TGSG…ASAS), and 2002-2012 (RRAPSPSLLPA). Residues Arg2022, Arg2042, and Arg2080 each carry the omega-N-methylarginine modification. The region spanning 2104–2167 (WTKFDVADWL…DRALKFFLER (64 aa)) is the SAM domain.

It belongs to the SHANK family. As to quaternary structure, may homomultimerize via its SAM domain. Interacts with the C-terminus of SSTR2 via the PDZ domain. Interacts with SHARPIN, SPTAN1, HOMER1 and DLGAP1/GKAP. Part of a complex with DLG4/PSD-95 and DLGAP1/GKAP. Interacts with BAIAP2. Interacts with IGSF9. Interacts with HOMER1 and HOMER3. In brain, highly expressed in cortex, hippocampus and cerebellum.

It is found in the cytoplasm. It localises to the synapse. The protein localises to the postsynaptic density. In terms of biological role, seems to be an adapter protein in the postsynaptic density (PSD) of excitatory synapses that interconnects receptors of the postsynaptic membrane including NMDA-type and metabotropic glutamate receptors, and the actin-based cytoskeleton. Plays a role in the structural and functional organization of the dendritic spine and synaptic junction. Overexpression promotes maturation of dendritic spines and the enlargement of spine heads via its ability to recruit Homer to postsynaptic sites, and enhances presynaptic function. The protein is SH3 and multiple ankyrin repeat domains protein 1 (Shank1) of Mus musculus (Mouse).